The primary structure comprises 328 residues: Biotin synthase (328 aa).

Residues 51-282 form the Radical SAM core domain; that stretch reads FNGNHVDLCS…DKIIRYAGGR (232 aa). Residues Cys69, Cys73, and Cys76 each contribute to the [4Fe-4S] cluster site. Residues Cys112, Cys147, Cys207, and Arg277 each coordinate [2Fe-2S] cluster.

The protein belongs to the radical SAM superfamily. Biotin synthase family. As to quaternary structure, homodimer. The cofactor is [4Fe-4S] cluster. [2Fe-2S] cluster is required as a cofactor.

It carries out the reaction (4R,5S)-dethiobiotin + (sulfur carrier)-SH + 2 reduced [2Fe-2S]-[ferredoxin] + 2 S-adenosyl-L-methionine = (sulfur carrier)-H + biotin + 2 5'-deoxyadenosine + 2 L-methionine + 2 oxidized [2Fe-2S]-[ferredoxin]. The protein operates within cofactor biosynthesis; biotin biosynthesis; biotin from 7,8-diaminononanoate: step 2/2. Catalyzes the conversion of dethiobiotin (DTB) to biotin by the insertion of a sulfur atom into dethiobiotin via a radical-based mechanism. This chain is Biotin synthase, found in Clostridium acetobutylicum (strain ATCC 824 / DSM 792 / JCM 1419 / IAM 19013 / LMG 5710 / NBRC 13948 / NRRL B-527 / VKM B-1787 / 2291 / W).